Consider the following 115-residue polypeptide: Large ribosomal subunit protein bL19 (115 aa).

It belongs to the bacterial ribosomal protein bL19 family.

In terms of biological role, this protein is located at the 30S-50S ribosomal subunit interface and may play a role in the structure and function of the aminoacyl-tRNA binding site. The protein is Large ribosomal subunit protein bL19 of Bacillus licheniformis (strain ATCC 14580 / DSM 13 / JCM 2505 / CCUG 7422 / NBRC 12200 / NCIMB 9375 / NCTC 10341 / NRRL NRS-1264 / Gibson 46).